The following is a 339-amino-acid chain: Anthranilate phosphoribosyltransferase (339 aa).

Residues Gly82, Gly85–Asp86, Thr90, Asn92–Thr95, and Lys110–Ser118 each bind 5-phospho-alpha-D-ribose 1-diphosphate. Position 82 (Gly82) interacts with anthranilate. Mg(2+) is bound at residue Ser94. Residues Asn113 and Arg168 each contribute to the anthranilate site. 2 residues coordinate Mg(2+): Asp227 and Glu228.

The protein belongs to the anthranilate phosphoribosyltransferase family. Homodimer. Mg(2+) serves as cofactor.

The catalysed reaction is N-(5-phospho-beta-D-ribosyl)anthranilate + diphosphate = 5-phospho-alpha-D-ribose 1-diphosphate + anthranilate. It functions in the pathway amino-acid biosynthesis; L-tryptophan biosynthesis; L-tryptophan from chorismate: step 2/5. In terms of biological role, catalyzes the transfer of the phosphoribosyl group of 5-phosphorylribose-1-pyrophosphate (PRPP) to anthranilate to yield N-(5'-phosphoribosyl)-anthranilate (PRA). The sequence is that of Anthranilate phosphoribosyltransferase from Clostridium beijerinckii (strain ATCC 51743 / NCIMB 8052) (Clostridium acetobutylicum).